Reading from the N-terminus, the 442-residue chain is Putative zinc metalloprotease PM1991 (442 aa).

His21 lines the Zn(2+) pocket. Residue Glu22 is part of the active site. Residue His25 coordinates Zn(2+). A helical membrane pass occupies residues 97–119; that stretch reads AFVIAAGPIANFLFAILAYFTIY. The PDZ domain occupies 198–286; sequence DWRFDPEKES…FSFVVLTPEL (89 aa). A run of 2 helical transmembrane segments spans residues 366–388 and 418–440; these read IGLIYYLGFMALISVNLGIMNLF and LSYRIGAAILMALMGFALFNDFL.

It belongs to the peptidase M50B family. The cofactor is Zn(2+).

It is found in the cell inner membrane. This chain is Putative zinc metalloprotease PM1991, found in Pasteurella multocida (strain Pm70).